A 185-amino-acid polypeptide reads, in one-letter code: NEDD8-conjugating enzyme UBE2F (185 aa).

An interaction with uba3 region spans residues 1-29 (MLTLASKLKREEGVRAGRTPAGSNDAAHR). The UBC core domain occupies 32–185 (IRDRLLIKEV…VQDFIKNYAR (154 aa)). Catalysis depends on Cys116, which acts as the Glycyl thioester intermediate.

This sequence belongs to the ubiquitin-conjugating enzyme family. UBE2F subfamily.

The enzyme catalyses [E1 NEDD8-activating enzyme]-S-[NEDD8 protein]-yl-L-cysteine + [E2 NEDD8-conjugating enzyme]-L-cysteine = [E1 NEDD8-activating enzyme]-L-cysteine + [E2 NEDD8-conjugating enzyme]-S-[NEDD8-protein]-yl-L-cysteine.. The protein operates within protein modification; protein neddylation. Functionally, accepts the ubiquitin-like protein NEDD8 from the UBA3-NAE1 E1 complex and catalyzes its covalent attachment to other proteins. Together with the E3 ubiquitin ligase rnf7/rbx2, specifically neddylates cullin-5 (cul5). Does not neddylate cul1, cul2, cul3, cul4a or cul4b. The sequence is that of NEDD8-conjugating enzyme UBE2F (ube2f) from Danio rerio (Zebrafish).